The following is a 147-amino-acid chain: MKNQMNLQFSALSQNESFARVTVASFITQLDPTMDELTEIKTVVSEAVTNAIIHGYESNSDGVVYISVTLHEDGVVELMIRDEGIGIDNVDEAKQPLYTTKPDLERSGMGFTIMENFMDEIRVESTVLEGTTLYLKKHLTNSKALCN.

This sequence belongs to the anti-sigma-factor family.

It carries out the reaction L-seryl-[protein] + ATP = O-phospho-L-seryl-[protein] + ADP + H(+). The catalysed reaction is L-threonyl-[protein] + ATP = O-phospho-L-threonyl-[protein] + ADP + H(+). Binds to sigma F and blocks its ability to form an RNA polymerase holoenzyme (E-sigma F). Phosphorylates SpoIIAA on a serine residue. This phosphorylation may enable SpoIIAA to act as an anti-anti-sigma factor that counteracts SpoIIAB and thus releases sigma F from inhibition. This is Anti-sigma F factor from Priestia megaterium (Bacillus megaterium).